Here is a 323-residue protein sequence, read N- to C-terminus: Solute carrier family 35 member B1 (323 aa).

The next 8 membrane-spanning stretches (helical) occupy residues 15–35 (LVCF…QETI), 51–71 (FALS…KLLI), 85–105 (WLYA…NSAL), 136–156 (YPLS…LFMY), 169–189 (TFGY…LTGV), 205–225 (MMLY…VFTG), 253–273 (LGQT…CSII), and 286–306 (VILF…LVFL). Positions 319 to 323 (KKPSH) match the Di-lysine motif motif.

Belongs to the nucleotide-sugar transporter family. SLC35B subfamily.

The protein resides in the endoplasmic reticulum membrane. Functionally, probable sugar transporter. The polypeptide is Solute carrier family 35 member B1 (slc35b1) (Xenopus tropicalis (Western clawed frog)).